The primary structure comprises 426 residues: Serine--tRNA ligase (426 aa).

Residue 231 to 233 (TAE) coordinates L-serine. Residues 262 to 264 (RRE) and valine 278 each bind ATP. Residue glutamate 285 participates in L-serine binding. An ATP-binding site is contributed by 349–352 (EVSS). L-serine is bound at residue serine 384.

This sequence belongs to the class-II aminoacyl-tRNA synthetase family. Type-1 seryl-tRNA synthetase subfamily. In terms of assembly, homodimer. The tRNA molecule binds across the dimer.

The protein resides in the cytoplasm. The enzyme catalyses tRNA(Ser) + L-serine + ATP = L-seryl-tRNA(Ser) + AMP + diphosphate + H(+). It catalyses the reaction tRNA(Sec) + L-serine + ATP = L-seryl-tRNA(Sec) + AMP + diphosphate + H(+). It participates in aminoacyl-tRNA biosynthesis; selenocysteinyl-tRNA(Sec) biosynthesis; L-seryl-tRNA(Sec) from L-serine and tRNA(Sec): step 1/1. Its function is as follows. Catalyzes the attachment of serine to tRNA(Ser). Is also able to aminoacylate tRNA(Sec) with serine, to form the misacylated tRNA L-seryl-tRNA(Sec), which will be further converted into selenocysteinyl-tRNA(Sec). This is Serine--tRNA ligase from Chlamydia caviae (strain ATCC VR-813 / DSM 19441 / 03DC25 / GPIC) (Chlamydophila caviae).